A 157-amino-acid chain; its full sequence is D-aminoacyl-tRNA deacylase (157 aa).

The Gly-cisPro motif, important for rejection of L-amino acids signature appears at 137-138; the sequence is GP.

The protein belongs to the DTD family. As to quaternary structure, homodimer.

The protein resides in the cytoplasm. The catalysed reaction is glycyl-tRNA(Ala) + H2O = tRNA(Ala) + glycine + H(+). It carries out the reaction a D-aminoacyl-tRNA + H2O = a tRNA + a D-alpha-amino acid + H(+). Its function is as follows. An aminoacyl-tRNA editing enzyme that deacylates mischarged D-aminoacyl-tRNAs. Also deacylates mischarged glycyl-tRNA(Ala), protecting cells against glycine mischarging by AlaRS. Acts via tRNA-based rather than protein-based catalysis; rejects L-amino acids rather than detecting D-amino acids in the active site. By recycling D-aminoacyl-tRNA to D-amino acids and free tRNA molecules, this enzyme counteracts the toxicity associated with the formation of D-aminoacyl-tRNA entities in vivo and helps enforce protein L-homochirality. The polypeptide is D-aminoacyl-tRNA deacylase (Roseiflexus castenholzii (strain DSM 13941 / HLO8)).